The chain runs to 658 residues: Carnitine O-palmitoyltransferase 2, mitochondrial (658 aa).

Residues 1-25 (MMPRLLFRAWPRCPSLVLGAPSRPL) constitute a mitochondrion transit peptide. The Mitochondrial matrix portion of the chain corresponds to 26–178 (SAVSGPDDYL…GLLEPEVFHL (153 aa)). An N6-succinyllysine mark is found at lysine 69 and lysine 85. An intramembrane region (note=Mitochondrial inner membrane) is located at residues 179–208 (NPSKSDTDAFKRLIRFVPPSLSWYGAYLVN). At 209-658 (AYPLDMSQYF…DALEGKAIKT (450 aa)) the chain is on the mitochondrial matrix side. The residue at position 239 (lysine 239) is an N6-acetyllysine; alternate. Residue lysine 239 is modified to N6-succinyllysine; alternate. An N6-acetyllysine modification is found at lysine 305. The Proton acceptor role is filled by histidine 372. N6-succinyllysine occurs at positions 424 and 439. Position 452–464 (452–464 (GKEFLKKKQLSPD)) interacts with CoA. Residues tyrosine 486, serine 488, and threonine 499 each contribute to the (R)-carnitine site. N6-acetyllysine; alternate is present on residues lysine 510 and lysine 544. Residues lysine 510 and lysine 544 each carry the N6-succinyllysine; alternate modification.

Belongs to the carnitine/choline acetyltransferase family.

It localises to the mitochondrion inner membrane. The enzyme catalyses (R)-carnitine + hexadecanoyl-CoA = O-hexadecanoyl-(R)-carnitine + CoA. It catalyses the reaction octanoyl-CoA + (R)-carnitine = O-octanoyl-(R)-carnitine + CoA. It carries out the reaction decanoyl-CoA + (R)-carnitine = O-decanoyl-(R)-carnitine + CoA. The catalysed reaction is dodecanoyl-CoA + (R)-carnitine = O-dodecanoyl-R-carnitine + CoA. The enzyme catalyses tetradecanoyl-CoA + (R)-carnitine = O-tetradecanoyl-(R)-carnitine + CoA. It catalyses the reaction (R)-carnitine + octadecanoyl-CoA = O-octadecanoyl-(R)-carnitine + CoA. It carries out the reaction eicosanoyl-CoA + (R)-carnitine = O-eicosanoyl-(R)-carnitine + CoA. The catalysed reaction is (9Z)-tetradecenoyl-CoA + (R)-carnitine = O-(9Z)-tetradecenoyl-(R)-carnitine + CoA. The enzyme catalyses (5Z)-tetradecenoyl-CoA + (R)-carnitine = O-(5Z)-tetradecenoyl-(R)-carnitine + CoA. It catalyses the reaction (R)-carnitine + (9Z)-octadecenoyl-CoA = O-(9Z)-octadecenoyl-(R)-carnitine + CoA. It carries out the reaction 4,8-dimethylnonanoyl-CoA + (R)-carnitine = O-4,8-dimethylnonanoyl-(R)-carnitine + CoA. It functions in the pathway lipid metabolism; fatty acid beta-oxidation. Its function is as follows. Involved in the intramitochondrial synthesis of acylcarnitines from accumulated acyl-CoA metabolites. Reconverts acylcarnitines back into the respective acyl-CoA esters that can then undergo beta-oxidation, an essential step for the mitochondrial uptake of long-chain fatty acids and their subsequent beta-oxidation in the mitochondrion. Active with medium (C8-C12) and long-chain (C14-C18) acyl-CoA esters. This chain is Carnitine O-palmitoyltransferase 2, mitochondrial, found in Rattus norvegicus (Rat).